Here is a 466-residue protein sequence, read N- to C-terminus: Probable ribonuclease FAU-1 (466 aa).

The S1 motif domain maps to 90–152 (GAIYAGTVTD…TDGRPVLDTT (63 aa)).

It belongs to the FAU-1 family.

In terms of biological role, probable RNase involved in rRNA stability through maturation and/or degradation of precursor rRNAs. Binds to RNA in loop regions with AU-rich sequences. The chain is Probable ribonuclease FAU-1 from Haloarcula marismortui (strain ATCC 43049 / DSM 3752 / JCM 8966 / VKM B-1809) (Halobacterium marismortui).